A 537-amino-acid chain; its full sequence is Tegument protein BRRF2 (537 aa).

Disordered stretches follow at residues 325-474 (LALP…EAQD) and 486-537 (GLRV…LSVI). Residues 334 to 347 (KPQQTCSQLTSRGN) are compositionally biased toward polar residues. The segment covering 423–441 (SSQAAPSSSSVAPVASLSG) has biased composition (low complexity). Residues 492–517 (DEDEDGSEDGEFSDLDLSDSDHEGDE) are compositionally biased toward acidic residues.

The protein belongs to the lymphocryptovirus BRRF2 family.

It is found in the virion tegument. In Homo sapiens (Human), this protein is Tegument protein BRRF2.